A 251-amino-acid polypeptide reads, in one-letter code: Pyrroloquinoline-quinone synthase (251 aa).

This sequence belongs to the PqqC family.

The catalysed reaction is 6-(2-amino-2-carboxyethyl)-7,8-dioxo-1,2,3,4,7,8-hexahydroquinoline-2,4-dicarboxylate + 3 O2 = pyrroloquinoline quinone + 2 H2O2 + 2 H2O + H(+). Its pathway is cofactor biosynthesis; pyrroloquinoline quinone biosynthesis. Ring cyclization and eight-electron oxidation of 3a-(2-amino-2-carboxyethyl)-4,5-dioxo-4,5,6,7,8,9-hexahydroquinoline-7,9-dicarboxylic-acid to PQQ. This is Pyrroloquinoline-quinone synthase from Cronobacter sakazakii (strain ATCC BAA-894) (Enterobacter sakazakii).